We begin with the raw amino-acid sequence, 378 residues long: 4-hydroxy-3-methylbut-2-en-1-yl diphosphate synthase (flavodoxin) (378 aa).

Residues cysteine 268, cysteine 271, cysteine 303, and glutamate 310 each coordinate [4Fe-4S] cluster.

This sequence belongs to the IspG family. Requires [4Fe-4S] cluster as cofactor.

It carries out the reaction (2E)-4-hydroxy-3-methylbut-2-enyl diphosphate + oxidized [flavodoxin] + H2O + 2 H(+) = 2-C-methyl-D-erythritol 2,4-cyclic diphosphate + reduced [flavodoxin]. It participates in isoprenoid biosynthesis; isopentenyl diphosphate biosynthesis via DXP pathway; isopentenyl diphosphate from 1-deoxy-D-xylulose 5-phosphate: step 5/6. Converts 2C-methyl-D-erythritol 2,4-cyclodiphosphate (ME-2,4cPP) into 1-hydroxy-2-methyl-2-(E)-butenyl 4-diphosphate. The protein is 4-hydroxy-3-methylbut-2-en-1-yl diphosphate synthase (flavodoxin) of Corynebacterium glutamicum (strain ATCC 13032 / DSM 20300 / JCM 1318 / BCRC 11384 / CCUG 27702 / LMG 3730 / NBRC 12168 / NCIMB 10025 / NRRL B-2784 / 534).